Here is a 1419-residue protein sequence, read N- to C-terminus: Formin-1 (1419 aa).

A microtubule-binding region spans residues 1-622; it reads MEGTHCTLQL…TAEPQHQSPP (622 aa). Disordered stretches follow at residues 138 to 194, 262 to 331, 343 to 641, and 685 to 711; these read DWQG…MGKD, LGRE…KVVA, VVKT…TPKD, and SLTE…DTEE. Basic residues predominate over residues 151–163; that stretch reads RSTHGNKKPRRSS. Over residues 298–317 the composition is skewed to basic and acidic residues; the sequence is SHQDPEKHPEAEKDEMEKPA. Over residues 394–411 the composition is skewed to polar residues; that stretch reads RSSQSPAGETASISSVSA. Over residues 425 to 438 the composition is skewed to basic and acidic residues; that stretch reads IESEKLDEAPEGKR. Residues 456-842 are mediates interaction with alpha-catenin; sequence NKRRAGLPLG…LNISSLSQLS (387 aa). Positions 504 to 517 are enriched in polar residues; that stretch reads FNNSASQSSTHKQT. A compositionally biased stretch (pro residues) spans 520–529; sequence VPSPLSPRLP. A compositionally biased stretch (polar residues) spans 614-623; sequence AEPQHQSPPG. The span at 685 to 694 shows a compositional bias: basic and acidic residues; it reads SLTEQDDRTP. The stretch at 720–774 forms a coiled coil; that stretch reads AEYQAAILHLKREHKEEIENLQAQFELRAFHIRGEHAMITARLEETIENLKHELE. Disordered stretches follow at residues 859–978 and 1390–1419; these read GMAS…AIEP and SEKK…VTTN. 2 stretches are compositionally biased toward pro residues: residues 868–882 and 890–958; these read LPPP…PPLP and PAPP…PPPG. Residues 870–957 enclose the FH1 domain; it reads PPPASIPPPP…PPGLAPPPPP (88 aa). The 417-residue stretch at 972–1388 folds into the FH2 domain; that stretch reads RKPAIEPSCP…KMAQESVSKL (417 aa).

It belongs to the formin homology family. Cappuccino subfamily. Interacts with alpha-catenin and may interact with tubulin. Post-translationally, phosphorylated on serine and possibly threonine residues.

The protein resides in the nucleus. It is found in the cytoplasm. The protein localises to the cell junction. It localises to the adherens junction. Its subcellular location is the cell membrane. Plays a role in the formation of adherens junction and the polymerization of linear actin cables. This chain is Formin-1 (FMN1), found in Homo sapiens (Human).